The following is a 417-amino-acid chain: MLLKAKDKEVYDAIASELNRQNSYLEMIASENFTSLEIMEAQGSVLTNKYAEGLPHKRYYGGCEYVDIVEDLAIQRAKELFKAEHANVQPHSGSQANMAVYMAVLKPGDTILGMSLAHGGHLTHGATVNFSGKIYNAVYYGVRESDYLIDYDQMYKLAKEHKPKMIIGGASAYPRVIDWAKMREIADSVGAYLMVDMAHYAGLIAGGVYPSPVEVSHFVTSTTHKTLRGPRSGFILSKQEFAKDIDKSVFPGTQGGPLMHVIAAKAVCFKEAMSDEFKQYAQQVVENARVLAEELLKEGINVLTGGTDSHMVLVDLRNIGITGKEAENRLGEAGITVNKNAVPFDPLPPTKTSGIRIGTPALTTRGMKEDQMKIIAKIIAKVLKNYSEDTLQKAREQVKDLCEAFPLYKELKDEICV.

(6S)-5,6,7,8-tetrahydrofolate-binding positions include Leu116 and 120–122; that span reads GHL. Residue Lys225 is modified to N6-(pyridoxal phosphate)lysine.

It belongs to the SHMT family. As to quaternary structure, homodimer. It depends on pyridoxal 5'-phosphate as a cofactor.

Its subcellular location is the cytoplasm. The catalysed reaction is (6R)-5,10-methylene-5,6,7,8-tetrahydrofolate + glycine + H2O = (6S)-5,6,7,8-tetrahydrofolate + L-serine. The protein operates within one-carbon metabolism; tetrahydrofolate interconversion. It participates in amino-acid biosynthesis; glycine biosynthesis; glycine from L-serine: step 1/1. Its function is as follows. Catalyzes the reversible interconversion of serine and glycine with tetrahydrofolate (THF) serving as the one-carbon carrier. This reaction serves as the major source of one-carbon groups required for the biosynthesis of purines, thymidylate, methionine, and other important biomolecules. Also exhibits THF-independent aldolase activity toward beta-hydroxyamino acids, producing glycine and aldehydes, via a retro-aldol mechanism. In Hydrogenobaculum sp. (strain Y04AAS1), this protein is Serine hydroxymethyltransferase.